We begin with the raw amino-acid sequence, 406 residues long: Dual-specificity RNA methyltransferase RlmN (406 aa).

Residue Glu-119 is the Proton acceptor of the active site. Residues 125–370 enclose the Radical SAM core domain; the sequence is DKGRGTLCVS…AMVRRTRGDD (246 aa). A disulfide bridge connects residues Cys-132 and Cys-375. Positions 139, 143, and 146 each coordinate [4Fe-4S] cluster. S-adenosyl-L-methionine is bound by residues 192 to 193, Ser-224, 246 to 248, and Asn-332; these read GE and SLH. Cys-375 serves as the catalytic S-methylcysteine intermediate.

This sequence belongs to the radical SAM superfamily. RlmN family. The cofactor is [4Fe-4S] cluster.

Its subcellular location is the cytoplasm. The catalysed reaction is adenosine(2503) in 23S rRNA + 2 reduced [2Fe-2S]-[ferredoxin] + 2 S-adenosyl-L-methionine = 2-methyladenosine(2503) in 23S rRNA + 5'-deoxyadenosine + L-methionine + 2 oxidized [2Fe-2S]-[ferredoxin] + S-adenosyl-L-homocysteine. It carries out the reaction adenosine(37) in tRNA + 2 reduced [2Fe-2S]-[ferredoxin] + 2 S-adenosyl-L-methionine = 2-methyladenosine(37) in tRNA + 5'-deoxyadenosine + L-methionine + 2 oxidized [2Fe-2S]-[ferredoxin] + S-adenosyl-L-homocysteine. Specifically methylates position 2 of adenine 2503 in 23S rRNA and position 2 of adenine 37 in tRNAs. m2A2503 modification seems to play a crucial role in the proofreading step occurring at the peptidyl transferase center and thus would serve to optimize ribosomal fidelity. This chain is Dual-specificity RNA methyltransferase RlmN, found in Xylella fastidiosa (strain Temecula1 / ATCC 700964).